The primary structure comprises 353 residues: Trans-enoyl reductase fsa3 (353 aa).

45–48 (VDTK) lines the NADP(+) pocket. Residue 131 to 138 (ISFMTTGL) coordinates substrate. NADP(+) contacts are provided by residues 166–169 (SSAT), 189–192 (SPRN), Tyr-207, and 254–255 (LE). 275 to 279 (GPQML) contacts substrate. Residue 344–345 (IS) coordinates NADP(+).

Belongs to the zinc-containing alcohol dehydrogenase family. Monomer.

It catalyses the reaction L-serine + 7 malonyl-CoA + acetyl-CoA + 2 S-adenosyl-L-methionine + ATP + 8 NADPH + 11 H(+) = (5S)-3-[(2E,6R,8E,10E,12E)-2,6-dimethyltetradeca-2,8,10,12-tetraenoyl]-5-(hydroxymethyl)pyrrolidine-2,4-dione + AMP + 2 S-adenosyl-L-homocysteine + 7 CO2 + diphosphate + 8 NADP(+) + 8 CoA + 6 H2O. Its pathway is mycotoxin biosynthesis. Trans-enoyl reductase; part of the gene cluster that mediates the biosynthesis of HIV-1 integrase inhibitor equisetin and of fusarisetin A, both trans-fused decalin-containing tetramic acids showing also antimicrobial activity. The PKS module of fsa1 together with the enoylreductase fsa3 catalyze the formation of the polyketide unit which is then conjugated to L-serine by the condensation domain of the fsa1 NRPS module. Activity of the Dieckmann cyclase domain (RED) results in release of the Dieckmann product intermediate. Diels-Alderase fsa2 is involved in endo-selective Diels-Alder cycloaddition to form the decalin ring, leading to the production of N-desmethylequisetin also called trichosetin. Subsequent N-methylation is carried out by fsa4 to give equisetin. The enzymatic gene responsible for the conversion of equisetin to fusarisetin A has not been identified yet and is probably located outside of the fsa cluster. The sequence is that of Trans-enoyl reductase fsa3 from Fusarium sp. (strain FN080326).